The primary structure comprises 391 residues: S-adenosylmethionine synthase (391 aa).

H14 provides a ligand contact to ATP. D16 contributes to the Mg(2+) binding site. E42 contacts K(+). L-methionine is bound by residues E55 and Q98. The tract at residues 98-108 (QSADIAMGVDE) is flexible loop. Residues 172–174 (DGK), 238–239 (RF), D247, 253–254 (RK), A270, and K274 each bind ATP. D247 is an L-methionine binding site. K278 is a binding site for L-methionine.

This sequence belongs to the AdoMet synthase family. As to quaternary structure, homotetramer; dimer of dimers. Mg(2+) serves as cofactor. It depends on K(+) as a cofactor.

The protein localises to the cytoplasm. The enzyme catalyses L-methionine + ATP + H2O = S-adenosyl-L-methionine + phosphate + diphosphate. It functions in the pathway amino-acid biosynthesis; S-adenosyl-L-methionine biosynthesis; S-adenosyl-L-methionine from L-methionine: step 1/1. Catalyzes the formation of S-adenosylmethionine (AdoMet) from methionine and ATP. The overall synthetic reaction is composed of two sequential steps, AdoMet formation and the subsequent tripolyphosphate hydrolysis which occurs prior to release of AdoMet from the enzyme. The polypeptide is S-adenosylmethionine synthase (Clostridium acetobutylicum (strain ATCC 824 / DSM 792 / JCM 1419 / IAM 19013 / LMG 5710 / NBRC 13948 / NRRL B-527 / VKM B-1787 / 2291 / W)).